The primary structure comprises 350 residues: MFAITGGGTGGHLAIAKALAQEAQKNNQQSIYIGSQIGQDKTWFEGSSLFTHCYFLDSTGVVNKKGLGKIKAIFKQLKAAWEARNILKKHKIEYVISVGGFSAGGASIGAILSNTPLFIHEQNAIKGKLNEILTPFAKAIFGSFEGKSKNFIHTSYPVRDEFFTHSRVREKLHHLLFLGGSQGAKGINDFALQIVPELLKRGITIAHQCGERDFERIKKAYEHIGILDKVDVFAFDKEIVLRLQKADLCIARSGASSLWEMSANGLIGIFVPYPYAAKDHQYYNALHFTKQGLGLLLRESQLDMLRVFTFIESLQKQEDSLSEKSHLLMSKIQPNGAKEILEHITSLMSH.

UDP-N-acetyl-alpha-D-glucosamine-binding positions include 9–11 (TGG), N123, R159, S181, and Q281.

This sequence belongs to the glycosyltransferase 28 family. MurG subfamily.

It is found in the cell inner membrane. It catalyses the reaction di-trans,octa-cis-undecaprenyl diphospho-N-acetyl-alpha-D-muramoyl-L-alanyl-D-glutamyl-meso-2,6-diaminopimeloyl-D-alanyl-D-alanine + UDP-N-acetyl-alpha-D-glucosamine = di-trans,octa-cis-undecaprenyl diphospho-[N-acetyl-alpha-D-glucosaminyl-(1-&gt;4)]-N-acetyl-alpha-D-muramoyl-L-alanyl-D-glutamyl-meso-2,6-diaminopimeloyl-D-alanyl-D-alanine + UDP + H(+). The protein operates within cell wall biogenesis; peptidoglycan biosynthesis. Cell wall formation. Catalyzes the transfer of a GlcNAc subunit on undecaprenyl-pyrophosphoryl-MurNAc-pentapeptide (lipid intermediate I) to form undecaprenyl-pyrophosphoryl-MurNAc-(pentapeptide)GlcNAc (lipid intermediate II). The protein is UDP-N-acetylglucosamine--N-acetylmuramyl-(pentapeptide) pyrophosphoryl-undecaprenol N-acetylglucosamine transferase of Helicobacter hepaticus (strain ATCC 51449 / 3B1).